A 176-amino-acid polypeptide reads, in one-letter code: Ferritin, liver middle subunit (176 aa).

The region spanning 7 to 156 (QNYHRDCEAA…DFITNLSRMD (150 aa)) is the Ferritin-like diiron domain. Fe cation is bound by residues glutamate 24, glutamate 59, histidine 62, glutamate 104, and glutamine 138.

The protein belongs to the ferritin family. In liver, forms a heteromer consisting of middle and heavy subunits. The functional molecule forms a roughly spherical shell with a diameter of 12 nm and contains a central cavity into which the insoluble mineral iron core is deposited. In terms of tissue distribution, liver (at protein level).

It catalyses the reaction 4 Fe(2+) + O2 + 4 H(+) = 4 Fe(3+) + 2 H2O. In terms of biological role, stores iron in a soluble, non-toxic, readily available form. Important for iron homeostasis. Has ferroxidase activity. Iron is taken up in the ferrous form and deposited as ferric hydroxides after oxidation. In Trematomus bernacchii (Emerald rockcod), this protein is Ferritin, liver middle subunit.